The following is a 263-amino-acid chain: Acyl-[acyl-carrier-protein]--UDP-N-acetylglucosamine O-acyltransferase (263 aa).

It belongs to the transferase hexapeptide repeat family. LpxA subfamily. In terms of assembly, homotrimer.

Its subcellular location is the cytoplasm. The catalysed reaction is a (3R)-hydroxyacyl-[ACP] + UDP-N-acetyl-alpha-D-glucosamine = a UDP-3-O-[(3R)-3-hydroxyacyl]-N-acetyl-alpha-D-glucosamine + holo-[ACP]. It participates in glycolipid biosynthesis; lipid IV(A) biosynthesis; lipid IV(A) from (3R)-3-hydroxytetradecanoyl-[acyl-carrier-protein] and UDP-N-acetyl-alpha-D-glucosamine: step 1/6. Functionally, involved in the biosynthesis of lipid A, a phosphorylated glycolipid that anchors the lipopolysaccharide to the outer membrane of the cell. This is Acyl-[acyl-carrier-protein]--UDP-N-acetylglucosamine O-acyltransferase from Campylobacter jejuni subsp. jejuni serotype O:23/36 (strain 81-176).